Consider the following 52-residue polypeptide: Conotoxin Cal9.2d (52 aa).

Residues 1 to 6 constitute a propeptide that is removed on maturation; that stretch reads KRGVTL. Cystine bridges form between cysteine 14–cysteine 31, cysteine 19–cysteine 41, and cysteine 21–cysteine 46.

Expressed by the venom duct.

The protein resides in the secreted. Its function is as follows. Probable neurotoxin with unknown target. Possibly targets ion channels. This Californiconus californicus (California cone) protein is Conotoxin Cal9.2d.